Consider the following 417-residue polypeptide: Phosphoglycerate kinase 1 (417 aa).

An N-acetylserine modification is found at S2. 2 positions are modified to phosphoserine: S2 and S4. K6 is modified (N6-succinyllysine). K11 is modified (N6-acetyllysine). Positions 23, 24, 25, 26, 38, and 39 each coordinate (2R)-3-phosphoglycerate. Residues 38 to 43 form a mitochondrial targeting region exposed following cis-trans isomerization by PIN1 and recognized by the TOM complex for mitochondrial translocation of the protein region; the sequence is QRIKAA. K48 carries the post-translational modification N6-acetyllysine; alternate. K48 is modified (N6-succinyllysine; alternate). Positions 62, 63, 65, and 66 each coordinate (2R)-3-phosphoglycerate. N6-acetyllysine is present on K75. Residue Y76 is modified to Phosphotyrosine. 2 positions are modified to N6-acetyllysine: K86 and K91. K97 carries the post-translational modification N6-acetyllysine; alternate. K97 is subject to N6-(2-hydroxyisobutyryl)lysine; alternate. Residues L122 and R123 each contribute to the (2R)-3-phosphoglycerate site. At K131 the chain carries N6-acetyllysine; alternate. N6-malonyllysine; alternate is present on K131. K146 bears the N6-acetyllysine mark. H170 and R171 together coordinate (2R)-3-phosphoglycerate. At K191 the chain carries N6-succinyllysine. At Y196 the chain carries Phosphotyrosine. K199 bears the N6-acetyllysine mark. S203 is modified (phosphoserine; by MAPK1). G214 contributes to the ADP binding site. G214 provides a ligand contact to CDP. Positions 215 and 216 each coordinate AMP. A215 contacts ATP. A Mg(2+)-binding site is contributed by A215. At K216 the chain carries N6-(2-hydroxyisobutyryl)lysine. Positions 218 and 219 each coordinate Mg(2+). A CDP-binding site is contributed by D219. Position 220 (K220) interacts with AMP. Residue K220 coordinates ATP. An N6-(2-hydroxyisobutyryl)lysine modification is found at K220. Residue G238 coordinates ADP. A CDP-binding site is contributed by G238. An AMP-binding site is contributed by G239. G239 is an ATP binding site. K267 and K291 each carry N6-acetyllysine. G313 provides a ligand contact to AMP. G313 contributes to the ATP binding site. K323 bears the N6-(2-hydroxyisobutyryl)lysine mark. 3 residues coordinate CDP: G338, V340, and F343. F343 contributes to the ADP binding site. E344 provides a ligand contact to AMP. E344 serves as a coordination point for ATP. K361 bears the N6-acetyllysine mark. Residues D375 and T376 each contribute to the ATP site. D375 contacts Mg(2+).

Belongs to the phosphoglycerate kinase family. In terms of assembly, monomer. Interacts with kinase MAPK1/ERK2; the interaction is direct, occurs under hypoxic conditions, and promotes its interaction with PIN1. Interacts with peptidyl-prolyl cis-trans isomerase PIN1; the interaction is direct, occurs under hypoxic conditions, and targets the protein to the mitochondrion by promoting interactions with the TOM complex. Interacts with mitochondrial circRNA mcPGK1 (via its 2nd stem-loop); the interaction is direct and targets the protein to the mitochondrion by promoting interactions with the TOM complex. Interacts with pyruvate dehydrogenase kinase PDK1; the interaction is direct, occurs under hypoxic conditions and leads to PDK1-mediated inhibition of pyruvate dehydrogenase complex activity. It depends on Mg(2+) as a cofactor. Post-translationally, phosphorylated at Ser-203 by MAPK1/ERK2 under hypoxic conditions, which promotes its mitochondrial targeting. Mainly expressed in spermatogonia. Localized on the principle piece in the sperm (at protein level). Expression significantly decreased in the testis of elderly men.

It is found in the cytoplasm. The protein localises to the cytosol. Its subcellular location is the mitochondrion matrix. The enzyme catalyses (2R)-3-phosphoglycerate + ATP = (2R)-3-phospho-glyceroyl phosphate + ADP. It catalyses the reaction L-seryl-[protein] + ATP = O-phospho-L-seryl-[protein] + ADP + H(+). It functions in the pathway carbohydrate degradation; glycolysis; pyruvate from D-glyceraldehyde 3-phosphate: step 2/5. Its activity is regulated as follows. Specifically inhibited by heterocyclic compound CBR-470-0. Its function is as follows. Catalyzes one of the two ATP producing reactions in the glycolytic pathway via the reversible conversion of 1,3-diphosphoglycerate to 3-phosphoglycerate. Both L- and D- forms of purine and pyrimidine nucleotides can be used as substrates, but the activity is much lower on pyrimidines. In addition to its role as a glycolytic enzyme, it seems that PGK1 acts as a polymerase alpha cofactor protein (primer recognition protein). Acts as a protein kinase when localized to the mitochondrion where it phosphorylates pyruvate dehydrogenase kinase PDK1 to inhibit pyruvate dehydrogenase complex activity and suppress the formation of acetyl-coenzyme A from pyruvate, and consequently inhibit oxidative phosphorylation and promote glycolysis. May play a role in sperm motility. The sequence is that of Phosphoglycerate kinase 1 (PGK1) from Homo sapiens (Human).